The primary structure comprises 476 residues: Arginine biosynthesis bifunctional protein ArgJ, mitochondrial (476 aa).

Residues threonine 204, lysine 233, threonine 244, glutamate 331, asparagine 471, and threonine 476 each coordinate substrate. The active-site Nucleophile is the threonine 244.

The protein belongs to the ArgJ family. In terms of assembly, heterodimer of an alpha and a beta chain. Post-translationally, the alpha and beta chains are autoproteolytically processed from a single precursor protein within the mitochondrion.

It localises to the mitochondrion matrix. The enzyme catalyses N(2)-acetyl-L-ornithine + L-glutamate = N-acetyl-L-glutamate + L-ornithine. The catalysed reaction is L-glutamate + acetyl-CoA = N-acetyl-L-glutamate + CoA + H(+). It participates in amino-acid biosynthesis; L-arginine biosynthesis; L-ornithine and N-acetyl-L-glutamate from L-glutamate and N(2)-acetyl-L-ornithine (cyclic): step 1/1. Its pathway is amino-acid biosynthesis; L-arginine biosynthesis; N(2)-acetyl-L-ornithine from L-glutamate: step 1/4. In terms of biological role, catalyzes two activities which are involved in the cyclic version of arginine biosynthesis: the synthesis of acetylglutamate from glutamate and acetyl-CoA, and of ornithine by transacetylation between acetylornithine and glutamate. The polypeptide is Arginine biosynthesis bifunctional protein ArgJ, mitochondrial (Arthroderma otae (strain ATCC MYA-4605 / CBS 113480) (Microsporum canis)).